A 175-amino-acid chain; its full sequence is Ribosome maturation factor RimM (175 aa).

One can recognise a PRC barrel domain in the interval 95–175 (SEDEFYWREL…RIEVDWDPGF (81 aa)).

This sequence belongs to the RimM family. As to quaternary structure, binds ribosomal protein uS19.

The protein resides in the cytoplasm. In terms of biological role, an accessory protein needed during the final step in the assembly of 30S ribosomal subunit, possibly for assembly of the head region. Essential for efficient processing of 16S rRNA. May be needed both before and after RbfA during the maturation of 16S rRNA. It has affinity for free ribosomal 30S subunits but not for 70S ribosomes. This Aliivibrio salmonicida (strain LFI1238) (Vibrio salmonicida (strain LFI1238)) protein is Ribosome maturation factor RimM.